Consider the following 138-residue polypeptide: Actophorin (138 aa).

Serine 2 bears the Blocked amino end (Ser) mark. The ADF-H domain maps to 3 to 134 (GIAVSDDCVQ…SEDAVSERAK (132 aa)).

This sequence belongs to the actin-binding proteins ADF family. As to quaternary structure, monomer.

Its subcellular location is the cytoplasm. In terms of biological role, forms a one to one complex with monomeric actin. Can regulate the pool available for polymerization. Severs actin filaments in a dose-dependent manner. The polypeptide is Actophorin (Acanthamoeba castellanii (Amoeba)).